Reading from the N-terminus, the 249-residue chain is ATP synthase subunit a (249 aa).

6 helical membrane-spanning segments follow: residues 30–50 (QSPV…YVGM), 86–106 (FFPF…LGLL), 115–135 (HIAV…IVSL), 142–162 (FFAH…LVPI), 191–211 (MFAA…VLAV), and 218–238 (VALM…FAIL).

It belongs to the ATPase A chain family. F-type ATPases have 2 components, CF(1) - the catalytic core - and CF(0) - the membrane proton channel. CF(1) has five subunits: alpha(3), beta(3), gamma(1), delta(1), epsilon(1). CF(0) has three main subunits: a(1), b(2) and c(9-12). The alpha and beta chains form an alternating ring which encloses part of the gamma chain. CF(1) is attached to CF(0) by a central stalk formed by the gamma and epsilon chains, while a peripheral stalk is formed by the delta and b chains.

It is found in the cell inner membrane. In terms of biological role, key component of the proton channel; it plays a direct role in the translocation of protons across the membrane. The polypeptide is ATP synthase subunit a (Gluconacetobacter diazotrophicus (strain ATCC 49037 / DSM 5601 / CCUG 37298 / CIP 103539 / LMG 7603 / PAl5)).